A 344-amino-acid chain; its full sequence is Lipase chaperone (344 aa).

Residues 14–34 (VAVYGAVGLAAIAGVAIWSGA) form a helical membrane-spanning segment.

It belongs to the lipase chaperone family.

The protein localises to the cell inner membrane. In terms of biological role, may be involved in the folding of the extracellular lipase during its passage through the periplasm. This is Lipase chaperone from Burkholderia ambifaria (strain MC40-6).